An 89-amino-acid polypeptide reads, in one-letter code: Small ribosomal subunit protein uS15 (89 aa).

A compositionally biased stretch (basic and acidic residues) spans 1–21 (MALTTEEKKQVLSEYGLHETD). The segment at 1–24 (MALTTEEKKQVLSEYGLHETDTGS) is disordered.

Belongs to the universal ribosomal protein uS15 family. Part of the 30S ribosomal subunit. Forms a bridge to the 50S subunit in the 70S ribosome, contacting the 23S rRNA.

In terms of biological role, one of the primary rRNA binding proteins, it binds directly to 16S rRNA where it helps nucleate assembly of the platform of the 30S subunit by binding and bridging several RNA helices of the 16S rRNA. Forms an intersubunit bridge (bridge B4) with the 23S rRNA of the 50S subunit in the ribosome. This is Small ribosomal subunit protein uS15 from Rhodococcus jostii (strain RHA1).